A 176-amino-acid chain; its full sequence is ATP synthase subunit b (176 aa).

The chain crosses the membrane as a helical span at residues 27-47 (FFVFSFLTLILVVTIVTLLVY).

It belongs to the ATPase B chain family. As to quaternary structure, F-type ATPases have 2 components, F(1) - the catalytic core - and F(0) - the membrane proton channel. F(1) has five subunits: alpha(3), beta(3), gamma(1), delta(1), epsilon(1). F(0) has three main subunits: a(1), b(2) and c(10-14). The alpha and beta chains form an alternating ring which encloses part of the gamma chain. F(1) is attached to F(0) by a central stalk formed by the gamma and epsilon chains, while a peripheral stalk is formed by the delta and b chains.

The protein resides in the cell membrane. In terms of biological role, f(1)F(0) ATP synthase produces ATP from ADP in the presence of a proton or sodium gradient. F-type ATPases consist of two structural domains, F(1) containing the extramembraneous catalytic core and F(0) containing the membrane proton channel, linked together by a central stalk and a peripheral stalk. During catalysis, ATP synthesis in the catalytic domain of F(1) is coupled via a rotary mechanism of the central stalk subunits to proton translocation. Its function is as follows. Component of the F(0) channel, it forms part of the peripheral stalk, linking F(1) to F(0). The sequence is that of ATP synthase subunit b from Metamycoplasma arthritidis (strain 158L3-1) (Mycoplasma arthritidis).